The following is a 438-amino-acid chain: EF-hand calcium-binding domain-containing protein 3 (438 aa).

EF-hand domains are found at residues 47 to 82 (SQMA…LGMN) and 83 to 118 (LTKH…KNLF). Ca(2+) contacts are provided by aspartate 96, aspartate 98, aspartate 100, lysine 102, and aspartate 107. Tyrosine 279 is modified (phosphotyrosine). Positions 405–415 (SSHNSRSSSSS) are enriched in low complexity. The segment at 405–438 (SSHNSRSSSSSDTSECYTDSGRKRKRKGLKGFQQ) is disordered. The span at 426-438 (RKRKRKGLKGFQQ) shows a compositional bias: basic residues.

This chain is EF-hand calcium-binding domain-containing protein 3 (EFCAB3), found in Homo sapiens (Human).